Reading from the N-terminus, the 168-residue chain is ATP synthase subunit b (168 aa).

A helical transmembrane segment spans residues alanine 9–leucine 29.

It belongs to the ATPase B chain family. In terms of assembly, F-type ATPases have 2 components, F(1) - the catalytic core - and F(0) - the membrane proton channel. F(1) has five subunits: alpha(3), beta(3), gamma(1), delta(1), epsilon(1). F(0) has three main subunits: a(1), b(2) and c(10-14). The alpha and beta chains form an alternating ring which encloses part of the gamma chain. F(1) is attached to F(0) by a central stalk formed by the gamma and epsilon chains, while a peripheral stalk is formed by the delta and b chains.

It localises to the cell membrane. Functionally, f(1)F(0) ATP synthase produces ATP from ADP in the presence of a proton or sodium gradient. F-type ATPases consist of two structural domains, F(1) containing the extramembraneous catalytic core and F(0) containing the membrane proton channel, linked together by a central stalk and a peripheral stalk. During catalysis, ATP synthesis in the catalytic domain of F(1) is coupled via a rotary mechanism of the central stalk subunits to proton translocation. In terms of biological role, component of the F(0) channel, it forms part of the peripheral stalk, linking F(1) to F(0). This chain is ATP synthase subunit b, found in Bacillus cytotoxicus (strain DSM 22905 / CIP 110041 / 391-98 / NVH 391-98).